The following is an 858-amino-acid chain: DNA mismatch repair protein MutS (858 aa).

618–625 (GPNMGGKS) contributes to the ATP binding site.

Belongs to the DNA mismatch repair MutS family.

This protein is involved in the repair of mismatches in DNA. It is possible that it carries out the mismatch recognition step. This protein has a weak ATPase activity. The protein is DNA mismatch repair protein MutS of Shewanella woodyi (strain ATCC 51908 / MS32).